A 647-amino-acid polypeptide reads, in one-letter code: Leucine aminopeptidase 2 (647 aa).

Substrate-binding positions include Gln-169–Gln-171 and Pro-295–Glu-300. His-324 contributes to the Zn(2+) binding site. The Proton acceptor role is filled by Glu-325. Zn(2+) is bound by residues His-328 and Glu-347. Residue Tyr-418 is the Proton donor of the active site.

It belongs to the peptidase M1 family. The cofactor is Zn(2+).

It localises to the cytoplasm. The protein localises to the nucleus. The catalysed reaction is an epoxide + H2O = an ethanediol. In terms of biological role, aminopeptidase that preferentially cleaves di- and tripeptides. Also has low epoxide hydrolase activity (in vitro). Can hydrolyze the epoxide leukotriene LTA(4) but it forms preferentially 5,6-dihydroxy-7,9,11,14-eicosatetraenoic acid rather than the cytokine leukotriene B(4) as the product compared to the homologous mammalian enzyme (in vitro). The polypeptide is Leucine aminopeptidase 2 (Yarrowia lipolytica (strain CLIB 122 / E 150) (Yeast)).